The chain runs to 229 residues: Large ribosomal subunit protein uL1 (229 aa).

The protein belongs to the universal ribosomal protein uL1 family. As to quaternary structure, part of the 50S ribosomal subunit.

In terms of biological role, binds directly to 23S rRNA. The L1 stalk is quite mobile in the ribosome, and is involved in E site tRNA release. Protein L1 is also a translational repressor protein, it controls the translation of the L11 operon by binding to its mRNA. The protein is Large ribosomal subunit protein uL1 of Streptococcus thermophilus (strain CNRZ 1066).